Reading from the N-terminus, the 269-residue chain is MPELPEVETSRRGIEPHLVGATILHAHIRNGRLRWPVSDEIYRLSDTPVLSVQRRAKYLLLELPDGWIIIHLGMSGSLRILSEAQPAEKHDHVDLVMSNGKILRYTDPRRFGAWLWTKELEGHNVLAHLGPEPLSDEFNGEYLQQKCAKRKTAIKPWLMDNKLVVGVGNIYASESLFAAGIHPDRLASSLSKEECDLLARVIKAVLLRSIEQGGTTLKDFLQSDGKPGYFAQELQVYGRKGEPCRVCGTPVVATKHAQRATFYCRHCQK.

Pro2 acts as the Schiff-base intermediate with DNA in catalysis. Glu3 acts as the Proton donor in catalysis. The active-site Proton donor; for beta-elimination activity is Lys57. 3 residues coordinate DNA: His90, Arg109, and Arg150. An FPG-type zinc finger spans residues Gln235–Lys269. Arg259 acts as the Proton donor; for delta-elimination activity in catalysis.

The protein belongs to the FPG family. In terms of assembly, monomer. Requires Zn(2+) as cofactor.

It carries out the reaction Hydrolysis of DNA containing ring-opened 7-methylguanine residues, releasing 2,6-diamino-4-hydroxy-5-(N-methyl)formamidopyrimidine.. The enzyme catalyses 2'-deoxyribonucleotide-(2'-deoxyribose 5'-phosphate)-2'-deoxyribonucleotide-DNA = a 3'-end 2'-deoxyribonucleotide-(2,3-dehydro-2,3-deoxyribose 5'-phosphate)-DNA + a 5'-end 5'-phospho-2'-deoxyribonucleoside-DNA + H(+). Functionally, involved in base excision repair of DNA damaged by oxidation or by mutagenic agents. Acts as a DNA glycosylase that recognizes and removes damaged bases. Has a preference for oxidized purines, such as 7,8-dihydro-8-oxoguanine (8-oxoG). Has AP (apurinic/apyrimidinic) lyase activity and introduces nicks in the DNA strand. Cleaves the DNA backbone by beta-delta elimination to generate a single-strand break at the site of the removed base with both 3'- and 5'-phosphates. The sequence is that of Formamidopyrimidine-DNA glycosylase from Salmonella arizonae (strain ATCC BAA-731 / CDC346-86 / RSK2980).